The following is a 439-amino-acid chain: Proton pump-interactor 4 (439 aa).

The stretch at 286 to 354 (KEEKEIDEET…AKKKKAVCKS (69 aa)) forms a coiled coil. A helical transmembrane segment spans residues 415–435 (LWVWTVSSAAVALPLALLVVF).

This sequence belongs to the plant Proton pump-interactor protein family.

The protein resides in the cell membrane. It is found in the endoplasmic reticulum membrane. Its function is as follows. May regulate plasma membrane ATPase activity. This Arabidopsis thaliana (Mouse-ear cress) protein is Proton pump-interactor 4 (PPI4).